Here is a 602-residue protein sequence, read N- to C-terminus: ATP-dependent DNA helicase II subunit 1 (602 aa).

Positions 268-483 constitute a Ku domain; the sequence is FQCPLILDEK…YDNMKKVTQS (216 aa). 3 positions are modified to phosphoserine: Ser-370, Ser-371, and Ser-372.

This sequence belongs to the ku70 family. As to quaternary structure, heterodimer of YKU70/HDF1 and YKU80/HDF2. In terms of processing, sumoylated by MMS21.

Its subcellular location is the nucleus. The protein resides in the chromosome. It is found in the telomere. It catalyses the reaction ATP + H2O = ADP + phosphate + H(+). Functionally, single-stranded DNA-dependent ATP-dependent helicase. Involved in non-homologous end joining (NHEJ) DNA double strand break repair. DNA-binding is sequence-independent but has a high affinity to nicks in double-stranded DNA and to the ends of duplex DNA. Binds to naturally occurring chromosomal ends, and therefore provides chromosomal end protection. Appears to have a role in recruitment of telomerase and CDC13 to the telomere and the subsequent telomere elongation. Required also for telomere recombination to repair telomeric ends in the absence of telomerase. KU70, of the KU70/KU80 heterodimer, binds to the stem loop of TLC1, the RNA component of telomerase. Involved in telomere maintenance. Interacts with telomeric repeats and subtelomeric sequences thereby controlling telomere length and protecting against subtelomeric rearrangement. Maintains telomeric chromatin, which is involved in silencing the expression of genes located at the telomere. Required for mating-type switching. The protein is ATP-dependent DNA helicase II subunit 1 (YKU70) of Saccharomyces cerevisiae (strain ATCC 204508 / S288c) (Baker's yeast).